The following is a 62-amino-acid chain: uncharacterized protein (62 aa).

Residues 17 to 37 (IVFFLGLVVVLLMMINLYMLI) form a helical membrane-spanning segment.

The protein localises to the membrane. This is an uncharacterized protein from Helicobacter pylori (strain J99 / ATCC 700824) (Campylobacter pylori J99).